Reading from the N-terminus, the 75-residue chain is Small ribosomal subunit protein bS16 (75 aa).

The protein belongs to the bacterial ribosomal protein bS16 family.

The polypeptide is Small ribosomal subunit protein bS16 (Campylobacter hominis (strain ATCC BAA-381 / DSM 21671 / CCUG 45161 / LMG 19568 / NCTC 13146 / CH001A)).